The chain runs to 517 residues: Ribonuclease Y (517 aa).

The chain crosses the membrane as a helical span at residues 1–21 (MIEVLIGLGAGVVGVGAGYLY). The 67-residue stretch at 207 to 273 (LINVVNIKND…TRVIELLVED (67 aa)) folds into the KH domain. One can recognise an HD domain in the interval 333–426 (ALAHSLEVAH…VCAADALSAA (94 aa)).

This sequence belongs to the RNase Y family.

Its subcellular location is the cell membrane. Endoribonuclease that initiates mRNA decay. This chain is Ribonuclease Y, found in Campylobacter concisus (strain 13826).